The sequence spans 48 residues: Piguamerin (48 aa).

Disulfide bonds link cysteine 3–cysteine 14, cysteine 8–cysteine 19, cysteine 21–cysteine 41, cysteine 26–cysteine 45, and cysteine 30–cysteine 47. In terms of domain architecture, Antistasin-like spans 19–47 (CVCVIGQCRKYCPNGFKKDENGCTFPCTC).

It belongs to the protease inhibitor I15 (antistasin) family.

It localises to the secreted. Inhibits plasma and tissue kallikrein, and trypsin. May be involved in leech hematophagia. The protein is Piguamerin of Hirudo nipponia (Korean blood-sucking leech).